The chain runs to 217 residues: Holliday junction branch migration complex subunit RuvA (217 aa).

Positions 1–64 (MIGKLTGILD…EDAIRLFGFE (64 aa)) are domain I. Residues 65–145 (TKVEQDWFCL…NAPHQSMPHF (81 aa)) are domain II. Residues 146-160 (VSYSSETSSQAGTQH) are flexible linker. The domain III stretch occupies residues 161–217 (TGHQHSMDALAALTKLGFERDQATHALQEAIKAFEGETPSSALLIRHSLKLLSSHLK).

Belongs to the RuvA family. In terms of assembly, homotetramer. Forms an RuvA(8)-RuvB(12)-Holliday junction (HJ) complex. HJ DNA is sandwiched between 2 RuvA tetramers; dsDNA enters through RuvA and exits via RuvB. An RuvB hexamer assembles on each DNA strand where it exits the tetramer. Each RuvB hexamer is contacted by two RuvA subunits (via domain III) on 2 adjacent RuvB subunits; this complex drives branch migration. In the full resolvosome a probable DNA-RuvA(4)-RuvB(12)-RuvC(2) complex forms which resolves the HJ.

It localises to the cytoplasm. In terms of biological role, the RuvA-RuvB-RuvC complex processes Holliday junction (HJ) DNA during genetic recombination and DNA repair, while the RuvA-RuvB complex plays an important role in the rescue of blocked DNA replication forks via replication fork reversal (RFR). RuvA specifically binds to HJ cruciform DNA, conferring on it an open structure. The RuvB hexamer acts as an ATP-dependent pump, pulling dsDNA into and through the RuvAB complex. HJ branch migration allows RuvC to scan DNA until it finds its consensus sequence, where it cleaves and resolves the cruciform DNA. In Bartonella bacilliformis (strain ATCC 35685 / KC583 / Herrer 020/F12,63), this protein is Holliday junction branch migration complex subunit RuvA.